A 64-amino-acid polypeptide reads, in one-letter code: Large ribosomal subunit protein uL29 (64 aa).

This sequence belongs to the universal ribosomal protein uL29 family.

This is Large ribosomal subunit protein uL29 from Polynucleobacter necessarius subsp. necessarius (strain STIR1).